The primary structure comprises 351 residues: Tetraacyldisaccharide 4'-kinase (351 aa).

61 to 68 (TAGGTGKT) serves as a coordination point for ATP.

The protein belongs to the LpxK family.

The enzyme catalyses a lipid A disaccharide + ATP = a lipid IVA + ADP + H(+). It participates in glycolipid biosynthesis; lipid IV(A) biosynthesis; lipid IV(A) from (3R)-3-hydroxytetradecanoyl-[acyl-carrier-protein] and UDP-N-acetyl-alpha-D-glucosamine: step 6/6. Its function is as follows. Transfers the gamma-phosphate of ATP to the 4'-position of a tetraacyldisaccharide 1-phosphate intermediate (termed DS-1-P) to form tetraacyldisaccharide 1,4'-bis-phosphate (lipid IVA). This chain is Tetraacyldisaccharide 4'-kinase, found in Xanthomonas campestris pv. campestris (strain 8004).